The chain runs to 331 residues: Protein RecA (331 aa).

61-68 contacts ATP; the sequence is GPESSGKT.

Belongs to the RecA family.

It is found in the cytoplasm. In terms of biological role, can catalyze the hydrolysis of ATP in the presence of single-stranded DNA, the ATP-dependent uptake of single-stranded DNA by duplex DNA, and the ATP-dependent hybridization of homologous single-stranded DNAs. It interacts with LexA causing its activation and leading to its autocatalytic cleavage. This is Protein RecA from Mycoplasma mobile (strain ATCC 43663 / 163K / NCTC 11711) (Mesomycoplasma mobile).